The chain runs to 405 residues: Phosphoglycerate kinase (405 aa).

Substrate contacts are provided by residues 21–23 (DFN), arginine 38, 59–62 (HQSR), arginine 116, and arginine 156. ATP-binding positions include glutamate 330 and 355-358 (GGHT).

The protein belongs to the phosphoglycerate kinase family. In terms of assembly, monomer.

Its subcellular location is the cytoplasm. The catalysed reaction is (2R)-3-phosphoglycerate + ATP = (2R)-3-phospho-glyceroyl phosphate + ADP. Its pathway is carbohydrate degradation; glycolysis; pyruvate from D-glyceraldehyde 3-phosphate: step 2/5. The chain is Phosphoglycerate kinase from Methanocorpusculum labreanum (strain ATCC 43576 / DSM 4855 / Z).